The sequence spans 237 residues: Large ribosomal subunit protein uL2 (237 aa).

The segment covering 1–11 (MGKRIISQNRG) has biased composition (polar residues). Disordered stretches follow at residues 1 to 20 (MGKR…YRAP) and 201 to 237 (FGGG…GVRR).

This sequence belongs to the universal ribosomal protein uL2 family. As to quaternary structure, part of the 50S ribosomal subunit. Forms a bridge to the 30S subunit in the 70S ribosome.

In terms of biological role, one of the primary rRNA binding proteins. Required for association of the 30S and 50S subunits to form the 70S ribosome, for tRNA binding and peptide bond formation. It has been suggested to have peptidyltransferase activity; this is somewhat controversial. Makes several contacts with the 16S rRNA in the 70S ribosome. The protein is Large ribosomal subunit protein uL2 of Archaeoglobus fulgidus (strain ATCC 49558 / DSM 4304 / JCM 9628 / NBRC 100126 / VC-16).